The primary structure comprises 760 residues: 5-methyltetrahydropteroyltriglutamate--homocysteine methyltransferase (760 aa).

5-methyltetrahydropteroyltri-L-glutamate contacts are provided by residues 17–20 (RELK) and Lys118. L-homocysteine-binding positions include 436 to 438 (IGS) and Glu489. Residues 436–438 (IGS) and Glu489 each bind L-methionine. 5-methyltetrahydropteroyltri-L-glutamate is bound by residues 520-521 (RC) and Trp566. Asp604 is a binding site for L-homocysteine. L-methionine is bound at residue Asp604. Glu610 lines the 5-methyltetrahydropteroyltri-L-glutamate pocket. The Zn(2+) site is built by His646, Cys648, and Glu670. The active-site Proton donor is His699. Cys731 serves as a coordination point for Zn(2+).

This sequence belongs to the vitamin-B12 independent methionine synthase family. Requires Zn(2+) as cofactor.

The catalysed reaction is 5-methyltetrahydropteroyltri-L-glutamate + L-homocysteine = tetrahydropteroyltri-L-glutamate + L-methionine. The protein operates within amino-acid biosynthesis; L-methionine biosynthesis via de novo pathway; L-methionine from L-homocysteine (MetE route): step 1/1. Catalyzes the transfer of a methyl group from 5-methyltetrahydrofolate to homocysteine resulting in methionine formation. In Vibrio parahaemolyticus serotype O3:K6 (strain RIMD 2210633), this protein is 5-methyltetrahydropteroyltriglutamate--homocysteine methyltransferase.